A 449-amino-acid polypeptide reads, in one-letter code: Putative tartrate transporter (449 aa).

Helical transmembrane passes span 34 to 54 (IVPF…NIGF), 64 to 84 (GFSS…YFLF), 99 to 119 (IWIA…AFVQ), 130 to 150 (LLGV…SFWF), 156 to 176 (AAVT…GSPI), 194 to 214 (WMFL…LFFL), 259 to 279 (VIAL…LGIW), 292 to 312 (IEVG…MVLW), 336 to 356 (GLAF…LTIV), 367 to 387 (LWSM…IATI), and 414 to 434 (GGLY…LILA).

This sequence belongs to the major facilitator superfamily. Phthalate permease family.

The protein resides in the cell membrane. Its function is as follows. Component of the tartrate utilization system and may allow entry of tartrate and tartrate dehydrogenase. The chain is Putative tartrate transporter (ttuB) from Agrobacterium vitis (Rhizobium vitis).